Reading from the N-terminus, the 90-residue chain is uncharacterized protein (90 aa).

Residues 1–20 (MEKLFVLVFALTLLAFSSEA) form the signal peptide. The tract at residues 31–50 (QLLRSRRQDRPSKPGFPDEP) is disordered.

Its subcellular location is the secreted. This is an uncharacterized protein from Rattus norvegicus (Rat).